The chain runs to 386 residues: Enamidase (386 aa).

Residues H67, H69, and E164 each coordinate Zn(2+). Positions 164, 193, and 220 each coordinate Fe cation. D276 serves as a coordination point for Zn(2+).

As to quaternary structure, homotetramer. Dimer of dimers. It depends on Fe cation as a cofactor. The cofactor is Zn(2+).

The catalysed reaction is 1,4,5,6-tetrahydro-6-oxonicotinate + 2 H2O = 2-formylglutarate + NH4(+). The protein operates within cofactor degradation; nicotinate degradation; propanoate and pyruvate from 6-hydroxynicotinate: step 2/8. Its function is as follows. Decyclization of 6-oxo-1,4,5,6-tetrahydronicotinate to form 2-(enamine)glutarate, followed by hydrolysis to form (S)-2-formylglutarate. The chain is Enamidase from Eubacterium barkeri (Clostridium barkeri).